Reading from the N-terminus, the 159-residue chain is 17 kDa surface antigen (159 aa).

The signal sequence occupies residues 1–19 (MKLLSKIMIIALATSMLQA). Residue C20 is the site of N-palmitoyl cysteine attachment. The S-diacylglycerol cysteine moiety is linked to residue C20.

This sequence belongs to the rickettsiale 17 kDa surface antigen family.

It localises to the cell outer membrane. The chain is 17 kDa surface antigen (omp) from Rickettsia japonica (strain ATCC VR-1363 / YH).